Consider the following 422-residue polypeptide: uncharacterized protein (422 aa).

Phosphoserine is present on residues serine 124, serine 126, and serine 151. Residues 144–166 (TNSLNHDSPPSTPPRRPDTSTSK) form a disordered region. A Glycyl lysine isopeptide (Lys-Gly) (interchain with G-Cter in SUMO2) cross-link involves residue lysine 250. 2 disordered regions span residues 251–285 (ADTTTGSKPTGVFSRLGATPETDEDLAWDSDNDSS) and 299–324 (GRGPAKASPQPALTVKAKATSSATTA). The segment covering 271-282 (ETDEDLAWDSDN) has biased composition (acidic residues). Residues serine 280 and serine 306 each carry the phosphoserine modification. The span at 310–324 (ALTVKAKATSSATTA) shows a compositional bias: low complexity. Serine 351 is modified (phosphoserine).

This is an uncharacterized protein from Homo sapiens (Human).